We begin with the raw amino-acid sequence, 230 residues long: Large ribosomal subunit protein uL1 (230 aa).

The protein belongs to the universal ribosomal protein uL1 family. In terms of assembly, part of the 50S ribosomal subunit.

In terms of biological role, binds directly to 23S rRNA. The L1 stalk is quite mobile in the ribosome, and is involved in E site tRNA release. Protein L1 is also a translational repressor protein, it controls the translation of the L11 operon by binding to its mRNA. This Bacillus cereus (strain G9842) protein is Large ribosomal subunit protein uL1.